The sequence spans 193 residues: Thymidine kinase (193 aa).

ATP contacts are provided by residues 15–22 and 87–90; these read GCMYSGKT and DELH. The active-site Proton acceptor is glutamate 88. 4 residues coordinate Zn(2+): cysteine 147, cysteine 150, cysteine 185, and cysteine 188.

The protein belongs to the thymidine kinase family. In terms of assembly, homotetramer.

Its subcellular location is the cytoplasm. It catalyses the reaction thymidine + ATP = dTMP + ADP + H(+). In Chloroflexus aurantiacus (strain ATCC 29366 / DSM 635 / J-10-fl), this protein is Thymidine kinase.